The following is a 150-amino-acid chain: Ribonuclease H (150 aa).

The RNase H type-1 domain occupies 1–142 (MSDSVELFTD…ADQLANRGVD (142 aa)). 4 residues coordinate Mg(2+): Asp-10, Glu-48, Asp-70, and Asp-134.

This sequence belongs to the RNase H family. In terms of assembly, monomer. Mg(2+) serves as cofactor.

It localises to the cytoplasm. The catalysed reaction is Endonucleolytic cleavage to 5'-phosphomonoester.. In terms of biological role, endonuclease that specifically degrades the RNA of RNA-DNA hybrids. The sequence is that of Ribonuclease H from Pseudomonas syringae pv. syringae (strain B728a).